Here is a 263-residue protein sequence, read N- to C-terminus: Hydroxyethylthiazole kinase 1 (263 aa).

Substrate is bound at residue methionine 42. Residues lysine 118 and threonine 164 each coordinate ATP. Glycine 191 lines the substrate pocket.

This sequence belongs to the Thz kinase family. Requires Mg(2+) as cofactor.

It catalyses the reaction 5-(2-hydroxyethyl)-4-methylthiazole + ATP = 4-methyl-5-(2-phosphooxyethyl)-thiazole + ADP + H(+). Its pathway is cofactor biosynthesis; thiamine diphosphate biosynthesis; 4-methyl-5-(2-phosphoethyl)-thiazole from 5-(2-hydroxyethyl)-4-methylthiazole: step 1/1. Catalyzes the phosphorylation of the hydroxyl group of 4-methyl-5-beta-hydroxyethylthiazole (THZ). This is Hydroxyethylthiazole kinase 1 from Clostridium botulinum (strain 657 / Type Ba4).